Consider the following 164-residue polypeptide: Replication restart protein DnaT (164 aa).

Belongs to the DnaT family. As to quaternary structure, homooligomerizes. Interacts with PriB. Component of the replication restart primosome. Primosome assembly occurs via a 'hand-off' mechanism. PriA binds to replication forks, subsequently PriB then DnaT bind; DnaT then displaces ssDNA to generate the helicase loading substrate.

Involved in the restart of stalled replication forks, which reloads the replicative helicase on sites other than the origin of replication. Can function in multiple replication restart pathways. Displaces ssDNA from a PriB-ssDNA complex. Probably forms a spiral filament on ssDNA. This Buchnera aphidicola subsp. Acyrthosiphon pisum (strain 5A) protein is Replication restart protein DnaT.